The following is a 64-amino-acid chain: DNA-binding protein 7a (64 aa).

It belongs to the 7 kDa DNA-binding/endoribonuclease P2 family. Monomer.

It localises to the cytoplasm. In terms of biological role, can constrain negative DNA supercoils. May be involved in maintaining the integrity of the genome at high temperature. The chain is DNA-binding protein 7a from Saccharolobus islandicus (strain L.D.8.5 / Lassen #2) (Sulfolobus islandicus).